The chain runs to 661 residues: Probable potassium transport system protein Kup 1 (661 aa).

Gly residues predominate over residues 1 to 11; that stretch reads MKGLFPAGGGN. Positions 1-38 are disordered; sequence MKGLFPAGGGNPPSSYLSRFLPHRKERSPENVTSGRNG. 12 consecutive transmembrane segments (helical) span residues 48–68, 85–105, 139–159, 177–197, 207–227, 251–271, 286–306, 324–344, 384–404, 405–425, 436–456, and 458–478; these read LALGALGIVYGDIGTSPLYTI, IMGVLSLILWSLTMVVSIKYI, AVVVMAALTGAALLYGDGFIT, AAKNLIVPLACGILLGLFLVQ, IFGPVMLVWFATIATLGLLCI, VHGLVVLGSVVLSITGGEALY, WFAMVFPSLLLNYFGQGAALL, LLLPMVALATMASIIASQAMI, LMMVVCIGLVLVFRASSGLAG, AYGVAVTANMAITSVVYFFVA, TAPLVGLFLVFDITYFGSNLL, and FFDGGWFPLAVALVIVIVMAS.

It belongs to the HAK/KUP transporter (TC 2.A.72) family.

It localises to the cell inner membrane. The catalysed reaction is K(+)(in) + H(+)(in) = K(+)(out) + H(+)(out). Functionally, transport of potassium into the cell. Likely operates as a K(+):H(+) symporter. This Syntrophobacter fumaroxidans (strain DSM 10017 / MPOB) protein is Probable potassium transport system protein Kup 1.